A 748-amino-acid polypeptide reads, in one-letter code: WD repeat-containing protein 91 (748 aa).

The stretch at 183-228 (QRTNQVQEENEVLRQKLFALQAEIHRLKKEEQQQEEEAAALVQHKL) forms a coiled coil. S257 carries the post-translational modification Phosphoserine. Low complexity predominate over residues 266–279 (LLPQSKKSPSRLSP). The segment at 266-368 (LLPQSKKSPS…PEVSGAEAEP (103 aa)) is disordered. Polar residues predominate over residues 284 to 300 (PQAQSSAKKDSFSSQAT). Phosphoserine occurs at positions 289 and 294. Residues 333–344 (RLQDHGKERREL) are compositionally biased toward basic and acidic residues. Residues 345–354 (LSTSSSQSQC) show a composition bias toward polar residues. WD repeat units lie at residues 407 to 446 (EHHSSIMHCRVDCSGRRVASLDVDGVIKVWSFNPIMQTKA), 449 to 489 (ISKS…NLCE), 512 to 556 (VCSA…QQLQ), 561 to 600 (PEPIAINCTAFNHNGNLLVTGAADGVIRLFDMQQHECAMS), 603 to 642 (AHCGEVYSVEFSCDENAVYSIGEDRKFIQWNIHKSGLKVS), 665 to 703 (VQVPRGRLFAFDSEGNYMLTCSATGGLIYKLGSEEKVLE), and 710 to 748 (GHRAPVVTVDWSTAMDCGTCLTASMDGKIKLTTLLAHKL).

This sequence belongs to the WD repeat WDR91 family. As to quaternary structure, interacts with WDR81; involved in early to late endosome cargo transport. Interacts with BECN1; negatively regulates the PI3 kinase/PI3K activity associated with endosomal membranes.

The protein resides in the early endosome membrane. The protein localises to the late endosome membrane. Functionally, functions as a negative regulator of the PI3 kinase/PI3K activity associated with endosomal membranes via BECN1, a core subunit of the PI3K complex. By modifying the phosphatidylinositol 3-phosphate/PtdInsP3 content of endosomal membranes may regulate endosome fusion, recycling, sorting and early to late endosome transport. It is for instance, required for the delivery of cargos like BST2/tetherin from early to late endosome and thereby participates indirectly to their degradation by the lysosome. May play a role in meiosis. This Mus musculus (Mouse) protein is WD repeat-containing protein 91.